We begin with the raw amino-acid sequence, 198 residues long: MATTAPNLHSLSSSFAFSNPSSNVSATSFTFQIPNKKAQISCISSKKLHTQKSFNFHDAVTPMNKPSFGRDLMVAQATEAVAPTTEEAATSQPKTSKKAKKLKYPRRILDVYQILQSPIITEAAIKNIADENSLLFTVDVRADKKMIREAISNFFGVKVRKVNTLIRPDGTKKAYIMLNKEYNASELAKKIGIFPGGN.

The N-terminal 76 residues, methionine 1–glutamine 76, are a transit peptide targeting the chloroplast.

This sequence belongs to the universal ribosomal protein uL23 family. Component of the chloroplast large ribosomal subunit (LSU). Mature 70S chloroplast ribosomes of higher plants consist of a small (30S) and a large (50S) subunit. The 30S small subunit contains 1 molecule of ribosomal RNA (16S rRNA) and 24 different proteins. The 50S large subunit contains 3 rRNA molecules (23S, 5S and 4.5S rRNA) and 33 different proteins.

It is found in the plastid. It localises to the chloroplast. Functionally, component of the chloroplast ribosome (chloro-ribosome), a dedicated translation machinery responsible for the synthesis of chloroplast genome-encoded proteins, including proteins of the transcription and translation machinery and components of the photosynthetic apparatus. The protein is Large ribosomal subunit protein uL23c (RPL23) of Spinacia oleracea (Spinach).